The primary structure comprises 432 residues: D-amino acid dehydrogenase (432 aa).

Valine 3 to tryptophan 17 provides a ligand contact to FAD.

This sequence belongs to the DadA oxidoreductase family. Requires FAD as cofactor.

It carries out the reaction a D-alpha-amino acid + A + H2O = a 2-oxocarboxylate + AH2 + NH4(+). The protein operates within amino-acid degradation; D-alanine degradation; NH(3) and pyruvate from D-alanine: step 1/1. Functionally, oxidative deamination of D-amino acids. In Citrobacter koseri (strain ATCC BAA-895 / CDC 4225-83 / SGSC4696), this protein is D-amino acid dehydrogenase.